The following is a 506-amino-acid chain: Acetylcholine receptor subunit gamma (506 aa).

Residues 1-17 (MVLTLLLIICLALEVRS) form the signal peptide. The Extracellular portion of the chain corresponds to 18 to 235 (ENEEGRLIEK…IIFFLIIQRK (218 aa)). An N-linked (GlcNAc...) asparagine glycan is attached at Asn85. A disulfide bond links Cys145 and Cys159. 3 helical membrane passes run 236 to 260 (PLFY…VYFL), 269 to 287 (CTLS…FLIA), and 303 to 324 (YLIF…VLNV). At 325-466 (SLRTPNTHSL…WVLIGKVIDK (142 aa)) the chain is on the cytoplasmic side. Tyr381 carries the phosphotyrosine; by Tyr-kinases modification. The helical transmembrane segment at 467 to 490 (ACFWIALLLFSIGTLAIFLTGHFN) threads the bilayer.

Belongs to the ligand-gated ion channel (TC 1.A.9) family. Acetylcholine receptor (TC 1.A.9.1) subfamily. Gamma/CHRNG sub-subfamily. In terms of assembly, pentamer of two alpha chains, and one each of the beta, delta, and gamma chains. Post-translationally, seems not to be glycosylated on Asn-158.

It localises to the postsynaptic cell membrane. It is found in the cell membrane. It carries out the reaction K(+)(in) = K(+)(out). The enzyme catalyses Na(+)(in) = Na(+)(out). In terms of biological role, after binding acetylcholine, the AChR responds by an extensive change in conformation that affects all subunits and leads to opening of an ion-conducting channel across the plasma membrane. The polypeptide is Acetylcholine receptor subunit gamma (CHRNG) (Tetronarce californica (Pacific electric ray)).